The chain runs to 445 residues: Beclin-1 (445 aa).

The short motif at 103–122 (TMENLSRRLKVTGDLFDIMS) is the BH3 element. The stretch at 137 to 264 (DTLLDQLDTQ…QLDKLKKTNV (128 aa)) forms a coiled coil. The interval 240–445 (DDLKSVENQM…AWVSSQFYNK (206 aa)) is evolutionary conserved domain (ECD). The required for membrane-association stretch occupies residues 420–445 (WTKALKFMLTNLKWGLAWVSSQFYNK).

This sequence belongs to the beclin family. In terms of assembly, component of the PI3K (PI3KC3/PI3K-III/class III phosphatidylinositol 3-kinase) complex. In terms of processing, may be proteolytically processed by caspases; the C-terminal fragment(s) may induce apoptosis.

The protein resides in the cytoplasm. It is found in the golgi apparatus. Its subcellular location is the trans-Golgi network membrane. The protein localises to the endosome membrane. It localises to the endoplasmic reticulum membrane. The protein resides in the mitochondrion membrane. It is found in the cytoplasmic vesicle. Its subcellular location is the autophagosome. Functionally, plays a central role in autophagy. Acts as core subunit of different PI3K complex forms that mediate formation of phosphatidylinositol 3-phosphate and are believed to play a role in multiple membrane trafficking pathways: PI3KC3-C1 is involved in initiation of autophagosomes and PI3KC3-C2 in maturation of autophagosomes and endocytosis. Involved in regulation of degradative endocytic trafficking and required for the abscission step in cytokinesis, probably in the context of PI3KC3-C2. Essential for the formation of PI3KC3-C2 but not PI3KC3-C1 PI3K complex forms. Involved in endocytosis including endosome formation in neuronal cells. The sequence is that of Beclin-1 (becn1) from Xenopus tropicalis (Western clawed frog).